The sequence spans 262 residues: Dihydroorotate dehydrogenase B (NAD(+)), electron transfer subunit (262 aa).

The FAD-binding FR-type domain maps to 2–102 (SKVFDAKVLA…MGPLGRGFTL (101 aa)). FAD is bound by residues 53–56 (RPIS), 70–72 (LFR), and 77–78 (GT). [2Fe-2S] cluster is bound by residues cysteine 224, cysteine 229, cysteine 232, and cysteine 248.

Belongs to the PyrK family. Heterotetramer of 2 PyrK and 2 PyrD type B subunits. However, the metal reductase complex seems to be composed of a heterooctamer of 4 PyrK and 4 PyrD subunits. The cofactor is FAD. [2Fe-2S] cluster is required as a cofactor.

It is found in the cytoplasm. It participates in pyrimidine metabolism; UMP biosynthesis via de novo pathway; orotate from (S)-dihydroorotate (NAD(+) route): step 1/1. Responsible for channeling the electrons from the oxidation of dihydroorotate from the FMN redox center in the PyrD type B subunit to the ultimate electron acceptor NAD(+). Its function is as follows. Together with PyrD, also forms a metal reductase complex able to reduce Fe(III)-chelates to Fe(II)-chelates, as well as soluble Cr(VI) and U(VI), using NADH as electron donor. To a lesser extent, can also use NADPH as an electron donor. Is unable to reduce riboflavin and FMN with NADH as electron donor. May have an in vivo role in metal reduction in D.reducens, which is an organism capable of reducing contaminant heavy metals and radionuclides. The sequence is that of Dihydroorotate dehydrogenase B (NAD(+)), electron transfer subunit from Desulforamulus reducens (strain ATCC BAA-1160 / DSM 100696 / MI-1) (Desulfotomaculum reducens).